The following is a 306-amino-acid chain: uncharacterized protein (306 aa).

Helical transmembrane passes span L6–L26, A35–A55, Y69–S89, V98–F118, L122–N142, Y154–A174, Q186–S206, L211–G231, V247–S267, and Y281–L301. EamA domains lie at M17–N142 and L166–I296.

It belongs to the EamA transporter family.

It localises to the cell membrane. This is an uncharacterized protein from Haemophilus influenzae (strain ATCC 51907 / DSM 11121 / KW20 / Rd).